The sequence spans 355 residues: Cyanide hydratase (355 aa).

Residues 6–286 (YKAAAVTSEP…GLLFVDIDLN (281 aa)) enclose the CN hydrolase domain. Residue Glu46 is the Proton acceptor of the active site. The active site involves Lys128. Cys163 functions as the Nucleophile in the catalytic mechanism.

It belongs to the carbon-nitrogen hydrolase superfamily. Nitrilase family. As to quaternary structure, oligomer of dimers, forming left-handed helical fibers.

The catalysed reaction is formamide = hydrogen cyanide + H2O. Its function is as follows. Catalyzes the hydration of cyanide to formamide. Degradation of cyanide may be important for plant pathogenic fungi in infection of cyanogenic plants. Also has low but significant nitrilase activity with acetonitrile, propionitrile and benzonitrile. The sequence is that of Cyanide hydratase from Gibberella baccata (Fusarium lateritium).